The primary structure comprises 607 residues: Rap1 GTPase-GDP dissociation stimulator 1-B (607 aa).

ARM repeat units lie at residues Glu79–Tyr118, Asp170–Glu211, Asp347–Ile390, Pro391–Asp431, and Ser479–Ala519.

As to quaternary structure, interacts with ralB. Probably interacts with the post-translationally isoprenylated (geranyl-geranylation) forms of ral proteins. Interacts with both GDP-bound and GTP-bound forms of ralA, but interaction is much stronger with ralA-GDP.

Its subcellular location is the cytoplasm. It is found in the cytosol. It localises to the endoplasmic reticulum. The protein localises to the mitochondrion. Stimulates GDP/GTP exchange reaction of a group of small GTP-binding proteins (G proteins) including Rap1a/Rap1b, RhoA, RhoB and KRas, by stimulating the dissociation of GDP from and the subsequent binding of GTP to each small G protein. The sequence is that of Rap1 GTPase-GDP dissociation stimulator 1-B (rap1gds1-b) from Xenopus laevis (African clawed frog).